Here is a 99-residue protein sequence, read N- to C-terminus: Large ribosomal subunit protein uL23 (99 aa).

It belongs to the universal ribosomal protein uL23 family. In terms of assembly, part of the 50S ribosomal subunit. Contacts protein L29, and trigger factor when it is bound to the ribosome.

In terms of biological role, one of the early assembly proteins it binds 23S rRNA. One of the proteins that surrounds the polypeptide exit tunnel on the outside of the ribosome. Forms the main docking site for trigger factor binding to the ribosome. This is Large ribosomal subunit protein uL23 from Francisella tularensis subsp. holarctica (strain OSU18).